An 89-amino-acid chain; its full sequence is ISHIAEASESRFVMEDWHNFGSDYDKTLMAWHERFNQAWPELSSRYSATFRRMFNYYLCACAGAFRARDIELWQVLFSRGVEGGIRVYR.

Residue Cys-61 is part of the active site.

This sequence belongs to the CFA/CMAS family.

It localises to the cytoplasm. The enzyme catalyses a 1-acyl-2-(9Z)-enoyl-sn-glycero-3-phospholipid + S-adenosyl-L-methionine = a 1-acyl-2-(9-cyclopronane)-acyl-sn-glycero-3-phospholipid + S-adenosyl-L-homocysteine + H(+). Functionally, transfers a methylene group from S-adenosyl-L-methionine to the cis double bond of an unsaturated fatty acid chain resulting in the replacement of the double bond with a methylene bridge. This chain is Cyclopropane-fatty-acyl-phospholipid synthase (cfa), found in Citrobacter freundii.